The chain runs to 357 residues: Sorbitol dehydrogenase (357 aa).

Alanine 2 is modified (N-acetylalanine). Residue cysteine 45 coordinates Zn(2+). Tyrosine 51 is a substrate binding site. Zn(2+) contacts are provided by histidine 70 and glutamate 71. Substrate is bound at residue glutamate 156. NAD(+)-binding residues include isoleucine 184, aspartate 204, and arginine 209. 2 positions are modified to phosphoserine: serine 211 and serine 225. NAD(+)-binding positions include 273–275 (VGL) and 297–299 (VFR). Residues arginine 299 and tyrosine 300 each contribute to the substrate site.

This sequence belongs to the zinc-containing alcohol dehydrogenase family. Homotetramer. Zn(2+) is required as a cofactor.

Its subcellular location is the mitochondrion membrane. It localises to the cell projection. It is found in the cilium. The protein localises to the flagellum. The enzyme catalyses xylitol + NAD(+) = D-xylulose + NADH + H(+). It carries out the reaction L-iditol + NAD(+) = keto-L-sorbose + NADH + H(+). The catalysed reaction is keto-D-fructose + NADH + H(+) = D-sorbitol + NAD(+). In terms of biological role, polyol dehydrogenase that catalyzes the reversible NAD(+)-dependent oxidation of various sugar alcohols. Is active with xylitol, L-iditol and D-sorbitol (D-glucitol) as substrates, leading to the C2-oxidized products D-xylulose, L-sorbose and D-fructose, respectively. Is a key enzyme in the polyol pathway that interconverts glucose and fructose via sorbitol, which constitutes an important alternate route for glucose metabolism. May play a role in sperm motility by using sorbitol as an alternative energy source for sperm motility. The chain is Sorbitol dehydrogenase (SORD) from Pongo abelii (Sumatran orangutan).